The chain runs to 409 residues: Arginine biosynthesis bifunctional protein ArgJ (409 aa).

Positions 165, 191, 202, 282, 404, and 409 each coordinate substrate. Residue Thr202 is the Nucleophile of the active site.

Belongs to the ArgJ family. As to quaternary structure, heterotetramer of two alpha and two beta chains.

It is found in the cytoplasm. It catalyses the reaction N(2)-acetyl-L-ornithine + L-glutamate = N-acetyl-L-glutamate + L-ornithine. The enzyme catalyses L-glutamate + acetyl-CoA = N-acetyl-L-glutamate + CoA + H(+). The protein operates within amino-acid biosynthesis; L-arginine biosynthesis; L-ornithine and N-acetyl-L-glutamate from L-glutamate and N(2)-acetyl-L-ornithine (cyclic): step 1/1. It functions in the pathway amino-acid biosynthesis; L-arginine biosynthesis; N(2)-acetyl-L-ornithine from L-glutamate: step 1/4. Its function is as follows. Catalyzes two activities which are involved in the cyclic version of arginine biosynthesis: the synthesis of N-acetylglutamate from glutamate and acetyl-CoA as the acetyl donor, and of ornithine by transacetylation between N(2)-acetylornithine and glutamate. This Parasynechococcus marenigrum (strain WH8102) protein is Arginine biosynthesis bifunctional protein ArgJ.